Here is a 436-residue protein sequence, read N- to C-terminus: Transcriptional regulator VdtR (436 aa).

The zn(2)-C6 fungal-type DNA-binding region spans 17-44 (CDRCSANKVKCTQEKPECERCRLLSLPC). Disordered regions lie at residues 51-147 (RIGK…HDKG) and 173-192 (TARE…EYSD). Positions 125–141 (SHNSNRPTNMASTNQDQ) are enriched in polar residues. Positions 174-192 (AREDQKQHPELRSEEEYSD) are enriched in basic and acidic residues.

It localises to the nucleus. Its function is as follows. Transcription factor that regulates expression of the viriditoxin biosynthesis cluster and viriditoxin synthesis. This chain is Transcriptional regulator VdtR, found in Byssochlamys spectabilis (Paecilomyces variotii).